We begin with the raw amino-acid sequence, 777 residues long: Semaphorin-3D (777 aa).

Residues 1–37 (MNVTKDENPRSRSQDLHLFHAWMMLIMTVLFLPVTET) form the signal peptide. One can recognise a Sema domain in the interval 44–531 (RLKLTYKDLL…SWDGLVQLSL (488 aa)). A disulfide bridge connects residues Cys-117 and Cys-128. Asn-139 carries N-linked (GlcNAc...) asparagine glycosylation. 4 disulfides stabilise this stretch: Cys-146–Cys-155, Cys-286–Cys-398, Cys-310–Cys-358, and Cys-534–Cys-552. Positions 533–585 (RCDTYGKACADCCLARDPYCAWDGNACSRYAPTSKRRARRQDVKYGDPITQCW) constitute a PSI domain. The Ig-like C2-type domain occupies 592–680 (SHETADEKVI…TFIHTIVKLT (89 aa)). N-linked (GlcNAc...) asparagine glycans are attached at residues Asn-607 and Asn-724. Cys-665 and Cys-731 are oxidised to a cystine. Basic residues predominate over residues 740–765 (RRQRNKGSPKWKHMQEMKKKRNRRHH). A disordered region spans residues 740 to 777 (RRQRNKGSPKWKHMQEMKKKRNRRHHRDLDELQRSVAT). Residues 766–777 (RDLDELQRSVAT) are compositionally biased toward basic and acidic residues.

This sequence belongs to the semaphorin family.

It is found in the secreted. Induces the collapse and paralysis of neuronal growth cones. Could potentially act as repulsive cues toward specific neuronal populations. Binds to neuropilin. The polypeptide is Semaphorin-3D (Sema3d) (Mus musculus (Mouse)).